A 96-amino-acid polypeptide reads, in one-letter code: Non-specific lipid-transfer protein 2G (96 aa).

The first 29 residues, 1-29, serve as a signal peptide directing secretion; the sequence is MAGMMKKQVVTALMLALVVLAAAPGGARA. 4 disulfide bridges follow: Cys31–Cys63, Cys39–Cys53, Cys54–Cys89, and Cys65–Cys96.

It is found in the secreted. Its subcellular location is the cell wall. Its function is as follows. Transfer lipids across membranes. May play a role in plant defense or in the biosynthesis of cuticle layers. The chain is Non-specific lipid-transfer protein 2G from Triticum aestivum (Wheat).